A 337-amino-acid polypeptide reads, in one-letter code: Protein BIG GRAIN 1-like (337 aa).

Disordered regions lie at residues 1 to 32, 120 to 163, and 179 to 235; these read MRDMEMRWAAPAPAARGRGRARRRAPDQPSFS, SAAG…RPAS, and KRPS…PSRS. The segment covering 137–146 has biased composition (basic and acidic residues); it reads HEQPDVEKTA. Low complexity-rich tracts occupy residues 150 to 163 and 195 to 209; these read PGSASARACRRPAS and PACSTAPPSSSSSYA.

It belongs to the BIG GRAIN 1 (BG1) plant protein family.

It is found in the cell membrane. In terms of biological role, involved in auxin transport. Regulator of the auxin signaling pathway. This is Protein BIG GRAIN 1-like from Oryza sativa subsp. japonica (Rice).